A 456-amino-acid chain; its full sequence is Argininosuccinate lyase (456 aa).

This sequence belongs to the lyase 1 family. Argininosuccinate lyase subfamily.

It localises to the cytoplasm. It carries out the reaction 2-(N(omega)-L-arginino)succinate = fumarate + L-arginine. It participates in amino-acid biosynthesis; L-arginine biosynthesis; L-arginine from L-ornithine and carbamoyl phosphate: step 3/3. In Carboxydothermus hydrogenoformans (strain ATCC BAA-161 / DSM 6008 / Z-2901), this protein is Argininosuccinate lyase.